Consider the following 448-residue polypeptide: uncharacterized protein (448 aa).

257–264 (GRNAQGKT) contributes to the ATP binding site.

This is an uncharacterized protein from Methanocaldococcus jannaschii (strain ATCC 43067 / DSM 2661 / JAL-1 / JCM 10045 / NBRC 100440) (Methanococcus jannaschii).